We begin with the raw amino-acid sequence, 31 residues long: Cyclotide mech-5 (31 aa).

Residues 1 to 31 (GVIPCGESCVFIPCISSVVGCTCKNKVCYRD) constitute a cross-link (cyclopeptide (Gly-Asp)). 3 disulfides stabilise this stretch: C5-C21, C9-C23, and C14-C28.

In terms of processing, this is a cyclic peptide. Post-translationally, contains 3 disulfide bonds.

Probably participates in a plant defense mechanism (Potential). Binds to and induces leakage in phospholipd membranes, particularly ones containing 1-palmitoyl-2-oleophosphatidylethanolamine (POPE). The chain is Cyclotide mech-5 from Melicytus chathamicus (Chatham Island mahoe).